The primary structure comprises 64 residues: Large ribosomal subunit protein bL32 (64 aa).

The disordered stretch occupies residues 1-36 (MAVQKSRVTPSRRGQRRSHDALSAKQLSTDPTTGEV).

The protein belongs to the bacterial ribosomal protein bL32 family.

The sequence is that of Large ribosomal subunit protein bL32 from Stenotrophomonas maltophilia (strain K279a).